Here is a 484-residue protein sequence, read N- to C-terminus: Zinc metalloproteinase-disintegrin jerdonitin (484 aa).

The signal sequence occupies residues 1–20 (MIQVLLVTICLAVFPYQGSS). Positions 21-191 (IILESGNIDD…KLSQIMIPPE (171 aa)) are excised as a propeptide. The residue at position 192 (Gln-192) is a Pyrrolidone carboxylic acid. The Peptidase M12B domain occupies 194 to 392 (RYIELVIVAD…FTSRCLYNEP (199 aa)). Ca(2+) contacts are provided by Glu-197 and Asp-281. 3 disulfides stabilise this stretch: Cys-305-Cys-387, Cys-345-Cys-369, and Cys-347-Cys-352. Zn(2+) is bound at residue His-330. Glu-331 is an active-site residue. Residues His-334 and His-340 each coordinate Zn(2+). Residues Cys-387, Asn-390, Val-402, Asn-405, Glu-409, Glu-412, and Asp-415 each coordinate Ca(2+). The Disintegrin domain maps to 400–484 (PSVCGNYYME…AGCPRNPFHA (85 aa)). 7 disulfides stabilise this stretch: Cys-403–Cys-422, Cys-414–Cys-432, Cys-416–Cys-427, Cys-426–Cys-449, Cys-440–Cys-446, Cys-445–Cys-470, and Cys-458–Cys-477. The Cell attachment site motif lies at 462 to 464 (RGD).

The protein belongs to the venom metalloproteinase (M12B) family. P-II subfamily. P-IIb sub-subfamily. In terms of assembly, monomer. Requires Zn(2+) as cofactor. In terms of processing, the N-terminus is blocked. In terms of tissue distribution, expressed by the venom gland.

It localises to the secreted. With respect to regulation, fibrinogenolytic activity is completely inhibited by EDTA, but not by PMSF. Functionally, snake venom zinc metalloproteinase that inhibits ADP-induced human platelet aggregation (IC(50)=120 nM (native) and IC(50)=248 nM (recombinant)). May act by binding to the receptor GPIIb/GPIIIa (ITGA2B/ITGB3) on the platelet surface. Degrades the alpha-chain of fibrinogen completely and the beta-chain partially, leaving the gamma chain intact. Also inhibits the growth of several cell lines, including human liver cancer cells (Bel7402), human leukemia cells (K562) and human gastric carcinoma cells (BGC823). The polypeptide is Zinc metalloproteinase-disintegrin jerdonitin (Protobothrops jerdonii (Jerdon's pitviper)).